Here is a 37-residue protein sequence, read N- to C-terminus: Large ribosomal subunit protein bL36 (37 aa).

The protein belongs to the bacterial ribosomal protein bL36 family.

The chain is Large ribosomal subunit protein bL36 from Dehalococcoides mccartyi (strain ATCC BAA-2266 / KCTC 15142 / 195) (Dehalococcoides ethenogenes (strain 195)).